The following is a 154-amino-acid chain: Ribosomal RNA large subunit methyltransferase H (154 aa).

Residues leucine 71 and glycine 103 each coordinate S-adenosyl-L-methionine.

The protein belongs to the RNA methyltransferase RlmH family. In terms of assembly, homodimer.

Its subcellular location is the cytoplasm. The enzyme catalyses pseudouridine(1915) in 23S rRNA + S-adenosyl-L-methionine = N(3)-methylpseudouridine(1915) in 23S rRNA + S-adenosyl-L-homocysteine + H(+). Specifically methylates the pseudouridine at position 1915 (m3Psi1915) in 23S rRNA. The polypeptide is Ribosomal RNA large subunit methyltransferase H (Solidesulfovibrio magneticus (strain ATCC 700980 / DSM 13731 / RS-1) (Desulfovibrio magneticus)).